Reading from the N-terminus, the 122-residue chain is NADPH-dependent 7-cyano-7-deazaguanine reductase (122 aa).

C34 (thioimide intermediate) is an active-site residue. Catalysis depends on D41, which acts as the Proton donor. Substrate-binding positions include 56–58 (VEL) and 75–76 (HE).

This sequence belongs to the GTP cyclohydrolase I family. QueF type 1 subfamily.

The protein resides in the cytoplasm. The catalysed reaction is 7-aminomethyl-7-carbaguanine + 2 NADP(+) = 7-cyano-7-deazaguanine + 2 NADPH + 3 H(+). It participates in tRNA modification; tRNA-queuosine biosynthesis. Catalyzes the NADPH-dependent reduction of 7-cyano-7-deazaguanine (preQ0) to 7-aminomethyl-7-deazaguanine (preQ1). The polypeptide is NADPH-dependent 7-cyano-7-deazaguanine reductase (Anaeromyxobacter sp. (strain Fw109-5)).